A 186-amino-acid polypeptide reads, in one-letter code: Probable calcium-binding protein CML25 (186 aa).

The segment covering 1 to 17 has biased composition (low complexity); sequence MFNKNQGSNGGSSSNVG. The interval 1-23 is disordered; that stretch reads MFNKNQGSNGGSSSNVGIGADSP. 4 consecutive EF-hand domains span residues 33-68, 69-104, 106-141, and 142-177; these read TEIR…LGHE, VPEE…GMDQ, DVLE…LGDE, and CSIA…GSRR. Ca(2+) is bound by residues D46, N48, D50, K52, and E57. Positions 119, 121, 123, 125, 130, 155, 157, 159, 161, and 166 each coordinate Ca(2+).

Its function is as follows. Potential calcium sensor. The chain is Probable calcium-binding protein CML25 (CML25) from Arabidopsis thaliana (Mouse-ear cress).